A 185-amino-acid chain; its full sequence is Ribosome-recycling factor (185 aa).

This sequence belongs to the RRF family.

The protein localises to the cytoplasm. Responsible for the release of ribosomes from messenger RNA at the termination of protein biosynthesis. May increase the efficiency of translation by recycling ribosomes from one round of translation to another. The sequence is that of Ribosome-recycling factor from Halorhodospira halophila (strain DSM 244 / SL1) (Ectothiorhodospira halophila (strain DSM 244 / SL1)).